Here is a 1124-residue protein sequence, read N- to C-terminus: MASNLTIDERWRVIEAYFKSKGLVRQHLDSYNDFVRNKLQEIIDEQGEIPTEIPGLKVRLGKIRIGKPRVRESDRGEREISPMEARLRNLTYAAPLWLTMIPVENNIEAEPEEVYIGDLPIMLKSAIDPISQYTLDKLIEIGEDPKDPGGYFIVNGSERVIVTQEDLAPNRVLVDTGKTGSNITHTAKIISSTAGYRVPVTIERLKDGTFHVSFPAVPGKIPFVILMRALGILTDRDIVYAVSLDPEVQNELFPSLEQASSIANVDDALDFIGSRVAIGQKRENRIEKAQQIIDKYFLPHLGTSAEDRKKKAYYLAYAISKVIELYLGRREPDDKDHYANKRLRLAGDLFASLFRVAFKAFVKDLTYQLEKSKVRGRKLALKALVRPDIVTERIRHALATGNWVGGRTGVSQLLDRTNWLSMLSHLRRVISSLARGQPNFEARDLHGTQWGRMCPFETPEGPNSGLVKNLALMAQIAVGINERIVEKTLYEMGVVPVEEVIRRVTEGGEDQNEYLKWSKVILNGRLIGYYQDGGELANKIRERRRKGEISDEVNVGHIVTDFINEVHVNCDSGRVRRPLIIVSNGNPLVTIEDIEKLESGAITFDDLVRQGKIEYLDAEEEENAYVALEPNDLTPDHTHLEIWSPAILGITASIIPYPEHNQSPRNTYQSAMAKQALGLYAANYQLRTDTRAHLLHYPQRPLVQTRALDIIGYTNRPAGNNAILAVMSFTGYNMEDSIIMNRSSVERGMYRSTFFRLYSTEEVKYPGGQEDKIVMPEAGVRGYKGKEYYRLLEDNGVVSPEVEVKGGDVLIGKVSPPRFLQEFKELSPEQAKRDTSIVTRHGEMGIVDLVLITETAEGNKLVKVRVRDLRIPTIGDKFASRHGQKGVIGMLIPQVDMPYTVKGVVPDIILNPHALPSRMTLGQIMEGIAGKYAALSGNIVDATPFYKTPIEQLQNEILRYGYLPDATEVVYDGRTGQKIKSRIYFGVVYYQKLHHMVADKLHARARGPVQILTRQPTEGRAREGGLRFGEMERDCLIGFGTAMLLKDRLLDNSDRTMIYVCDQCGYIGWYDKNKNKYVCPIHGDKSNLFPVTVSYAFKLLIQELMSMIISPRLVLEDKVGLSGG.

Cys-1061, Cys-1064, Cys-1079, and His-1082 together coordinate Zn(2+).

This sequence belongs to the RNA polymerase beta chain family. Part of the 13-subunit RNA polymerase complex. It depends on Zn(2+) as a cofactor.

It is found in the cytoplasm. The enzyme catalyses RNA(n) + a ribonucleoside 5'-triphosphate = RNA(n+1) + diphosphate. Functionally, DNA-dependent RNA polymerase (RNAP) catalyzes the transcription of DNA into RNA using the four ribonucleoside triphosphates as substrates. This subunit is involved in DNA promoter recognition. This Saccharolobus solfataricus (strain ATCC 35092 / DSM 1617 / JCM 11322 / P2) (Sulfolobus solfataricus) protein is DNA-directed RNA polymerase subunit Rpo2.